Consider the following 384-residue polypeptide: PqqA peptide cyclase (384 aa).

Residues 14 to 230 (IPAPVGLLAE…EAARERLKGQ (217 aa)) enclose the Radical SAM core domain. Residues cysteine 28, cysteine 32, and cysteine 35 each contribute to the [4Fe-4S] cluster site.

Belongs to the radical SAM superfamily. PqqE family. Interacts with PqqD. The interaction is necessary for activity of PqqE. [4Fe-4S] cluster is required as a cofactor.

The enzyme catalyses [PQQ precursor protein] + S-adenosyl-L-methionine = E-Y cross-linked-[PQQ precursor protein] + 5'-deoxyadenosine + L-methionine + H(+). It functions in the pathway cofactor biosynthesis; pyrroloquinoline quinone biosynthesis. Catalyzes the cross-linking of a glutamate residue and a tyrosine residue in the PqqA protein as part of the biosynthesis of pyrroloquinoline quinone (PQQ). The polypeptide is PqqA peptide cyclase (Methylorubrum extorquens (strain CM4 / NCIMB 13688) (Methylobacterium extorquens)).